Reading from the N-terminus, the 124-residue chain is Probable glycine cleavage system H protein (124 aa).

A Lipoyl-binding domain is found at 22 to 104; sequence TGRVGISEFA…FGDGWLVEID (83 aa). An N6-lipoyllysine modification is found at lysine 63.

The protein belongs to the GcvH family. As to quaternary structure, the glycine cleavage system is composed of four proteins: P, T, L and H. (R)-lipoate serves as cofactor.

The glycine cleavage system catalyzes the degradation of glycine. The H protein shuttles the methylamine group of glycine from the P protein to the T protein. The polypeptide is Probable glycine cleavage system H protein (Halobacterium salinarum (strain ATCC 700922 / JCM 11081 / NRC-1) (Halobacterium halobium)).